Consider the following 361-residue polypeptide: Nicotinate-nucleotide--dimethylbenzimidazole phosphoribosyltransferase (361 aa).

The active-site Proton acceptor is the Glu-314.

It belongs to the CobT family.

The catalysed reaction is 5,6-dimethylbenzimidazole + nicotinate beta-D-ribonucleotide = alpha-ribazole 5'-phosphate + nicotinate + H(+). It functions in the pathway nucleoside biosynthesis; alpha-ribazole biosynthesis; alpha-ribazole from 5,6-dimethylbenzimidazole: step 1/2. Catalyzes the synthesis of alpha-ribazole-5'-phosphate from nicotinate mononucleotide (NAMN) and 5,6-dimethylbenzimidazole (DMB). This chain is Nicotinate-nucleotide--dimethylbenzimidazole phosphoribosyltransferase, found in Mycobacterium bovis (strain BCG / Pasteur 1173P2).